The chain runs to 617 residues: Probable Xaa-Pro aminopeptidase P (617 aa).

Asp414, Asp425, Glu523, and Glu537 together coordinate Mn(2+).

This sequence belongs to the peptidase M24B family. Requires Mn(2+) as cofactor.

It carries out the reaction Release of any N-terminal amino acid, including proline, that is linked to proline, even from a dipeptide or tripeptide.. Its function is as follows. Catalyzes the removal of a penultimate prolyl residue from the N-termini of peptides. The sequence is that of Probable Xaa-Pro aminopeptidase P (AMPP) from Blastomyces gilchristii (strain SLH14081) (Blastomyces dermatitidis).